The chain runs to 455 residues: Argininosuccinate lyase (455 aa).

It belongs to the lyase 1 family. Argininosuccinate lyase subfamily.

It localises to the cytoplasm. It carries out the reaction 2-(N(omega)-L-arginino)succinate = fumarate + L-arginine. The protein operates within amino-acid biosynthesis; L-arginine biosynthesis; L-arginine from L-ornithine and carbamoyl phosphate: step 3/3. This chain is Argininosuccinate lyase, found in Roseiflexus sp. (strain RS-1).